Consider the following 256-residue polypeptide: MKVLIASKSDPASMQMLSYLEDNYDIKENSGRRFVKDFEIFVIEDRHIFHDMNLGNNYEYAVVLSRHSSAADIKSLTAHPTGNFGPKADLGGRPKTINVSCPKYMSGTLRQMLESYSGTKFQVTFEATHHGPIFDLPNYYVEIGTTENEWTDDDAKKTAVDAVINPDAKDFPNFVAVGGGHYAPKILEYFRRNEINIGHIISKHDHDDLEEWQIKDAVEKTPSCKGFLVDRKGTRSRVRDMVKSISDDLGLELIMI.

This sequence belongs to the DtdA deacylase family. As to quaternary structure, monomer. Requires Zn(2+) as cofactor.

The enzyme catalyses a D-aminoacyl-tRNA + H2O = a tRNA + a D-alpha-amino acid + H(+). It catalyses the reaction glycyl-tRNA(Ala) + H2O = tRNA(Ala) + glycine + H(+). Its function is as follows. D-aminoacyl-tRNA deacylase with broad substrate specificity. By recycling D-aminoacyl-tRNA to D-amino acids and free tRNA molecules, this enzyme counteracts the toxicity associated with the formation of D-aminoacyl-tRNA entities in vivo. The protein is D-aminoacyl-tRNA deacylase of Thermoplasma volcanium (strain ATCC 51530 / DSM 4299 / JCM 9571 / NBRC 15438 / GSS1).